The chain runs to 297 residues: L-ribulose 3-epimerase (297 aa).

The active-site Proton donor/acceptor is the E147. Position 147 (E147) interacts with Mn(2+). Substrate is bound by residues E153 and D180–H183. The Mn(2+) site is built by D180 and H206. Residue R212 coordinates substrate. The active-site Proton donor/acceptor is E241. Mn(2+) is bound at residue E241.

The protein belongs to the hyi family. In terms of assembly, homotetramer. Mn(2+) is required as a cofactor.

The catalysed reaction is L-ribulose = L-xylulose. The enzyme catalyses keto-D-tagatose = keto-D-sorbose. It catalyses the reaction D-allulose = keto-D-fructose. Strongly inhibited by Co(2+) and Ni(2+), and slightly inhibited by EDTA. Functionally, catalyzes the epimerization of various ketoses at the C(3) position. It is able to interconvert L-ribulose with high efficiency. The enzyme can also accept other ketopentoses such as D-psicose and D-tagatose with lower efficiency. This chain is L-ribulose 3-epimerase, found in Mesorhizobium japonicum (strain LMG 29417 / CECT 9101 / MAFF 303099) (Mesorhizobium loti (strain MAFF 303099)).